We begin with the raw amino-acid sequence, 217 residues long: MKFFLDTANVEEIKKAMEWGILDGVTTNPTLISKTGRPFKEVVKEILELVDGPVSLETVSLDAEGMIREGRMLAELGENVVVKIPMTPEGLKAVIALESEGIPTNVTLVFSPTQALLAAKAGASYVSPFVGRLDDISGEGMKLIEEIKTIFSNYEFDTEIIVASVRHPMHVLESALIGADICTMPFKVMEQLFKHPLTDIGLERFLKDWEKVPEKPF.

The active-site Schiff-base intermediate with substrate is the K83.

The protein belongs to the transaldolase family. Type 3B subfamily.

It is found in the cytoplasm. It catalyses the reaction D-sedoheptulose 7-phosphate + D-glyceraldehyde 3-phosphate = D-erythrose 4-phosphate + beta-D-fructose 6-phosphate. The protein operates within carbohydrate degradation; pentose phosphate pathway; D-glyceraldehyde 3-phosphate and beta-D-fructose 6-phosphate from D-ribose 5-phosphate and D-xylulose 5-phosphate (non-oxidative stage): step 2/3. Functionally, transaldolase is important for the balance of metabolites in the pentose-phosphate pathway. The polypeptide is Probable transaldolase (tal) (Aquifex aeolicus (strain VF5)).